Reading from the N-terminus, the 340-residue chain is DNA-directed RNA polymerase subunit alpha (340 aa).

Residues 1-233 (MYKNWRDLIR…EQLSIFINFD (233 aa)) are alpha N-terminal domain (alpha-NTD). The interval 246–340 (DEIDKINENL…RLRGEQNEEE (95 aa)) is alpha C-terminal domain (alpha-CTD).

The protein belongs to the RNA polymerase alpha chain family. In terms of assembly, homodimer. The RNAP catalytic core consists of 2 alpha, 1 beta, 1 beta' and 1 omega subunit. When a sigma factor is associated with the core the holoenzyme is formed, which can initiate transcription.

The catalysed reaction is RNA(n) + a ribonucleoside 5'-triphosphate = RNA(n+1) + diphosphate. Its function is as follows. DNA-dependent RNA polymerase catalyzes the transcription of DNA into RNA using the four ribonucleoside triphosphates as substrates. This chain is DNA-directed RNA polymerase subunit alpha, found in Pelobacter propionicus (strain DSM 2379 / NBRC 103807 / OttBd1).